The chain runs to 429 residues: Melanoma-associated antigen 11 (429 aa).

2 disordered regions span residues 1–30 and 188–215; these read METQ…GDFG and IFGS…IDPE. A compositionally biased stretch (polar residues) spans 194 to 209; it reads DEGSGSQEKEGPSTSP. Residues 222-421 enclose the MAGE domain; sequence LHDKIIDLVH…TSYPSLYEDA (200 aa).

As to expression, expressed in tumors of several types, such as melanoma, head and neck squamous cell carcinoma, lung carcinoma and breast carcinoma. Expressed in testis, ovary, prostate, cancerous prostate, breast and adrenal tissue.

The protein localises to the nucleus. It is found in the cytoplasm. Acts as androgen receptor coregulator that increases androgen receptor activity by modulating the receptors interdomain interaction. May play a role in embryonal development and tumor transformation or aspects of tumor progression. The polypeptide is Melanoma-associated antigen 11 (Homo sapiens (Human)).